Reading from the N-terminus, the 164-residue chain is Ion-translocating oxidoreductase complex subunit G (164 aa).

The residue at position 125 (T125) is an FMN phosphoryl threonine.

The protein belongs to the RnfG family. The complex is composed of six subunits: RnfA, RnfB, RnfC, RnfD, RnfE and RnfG. Requires FMN as cofactor.

Its function is as follows. Part of a membrane-bound complex that couples electron transfer with translocation of ions across the membrane. In Buchnera aphidicola subsp. Acyrthosiphon pisum (strain APS) (Acyrthosiphon pisum symbiotic bacterium), this protein is Ion-translocating oxidoreductase complex subunit G.